The primary structure comprises 420 residues: Serine--tRNA ligase (420 aa).

228–230 (TAE) is an L-serine binding site. 259 to 261 (RSE) serves as a coordination point for ATP. E282 lines the L-serine pocket. ATP is bound at residue 346–349 (EISS). S382 provides a ligand contact to L-serine.

It belongs to the class-II aminoacyl-tRNA synthetase family. Type-1 seryl-tRNA synthetase subfamily. Homodimer. The tRNA molecule binds across the dimer.

Its subcellular location is the cytoplasm. It catalyses the reaction tRNA(Ser) + L-serine + ATP = L-seryl-tRNA(Ser) + AMP + diphosphate + H(+). It carries out the reaction tRNA(Sec) + L-serine + ATP = L-seryl-tRNA(Sec) + AMP + diphosphate + H(+). Its pathway is aminoacyl-tRNA biosynthesis; selenocysteinyl-tRNA(Sec) biosynthesis; L-seryl-tRNA(Sec) from L-serine and tRNA(Sec): step 1/1. Functionally, catalyzes the attachment of serine to tRNA(Ser). Is also able to aminoacylate tRNA(Sec) with serine, to form the misacylated tRNA L-seryl-tRNA(Sec), which will be further converted into selenocysteinyl-tRNA(Sec). In Mycoplasmoides gallisepticum (strain R(low / passage 15 / clone 2)) (Mycoplasma gallisepticum), this protein is Serine--tRNA ligase.